Here is a 300-residue protein sequence, read N- to C-terminus: Cation-efflux pump FieF (300 aa).

4 consecutive transmembrane segments (helical) span residues 12 to 32 (AAIA…FAWW), 39 to 59 (ILAA…NLLV), 82 to 102 (AALA…LTGI), and 114 to 134 (PGVG…LVSF). Zn(2+)-binding residues include aspartate 45 and aspartate 49. Histidine 153 and aspartate 157 together coordinate Zn(2+). 2 helical membrane-spanning segments follow: residues 156-176 (SDVM…YGWH) and 178-198 (ADAL…LRMG).

Belongs to the cation diffusion facilitator (CDF) transporter (TC 2.A.4) family. FieF subfamily. Homodimer.

The protein resides in the cell inner membrane. It catalyses the reaction Zn(2+)(in) + H(+)(out) = Zn(2+)(out) + H(+)(in). The catalysed reaction is Cd(2+)(in) + H(+)(out) = Cd(2+)(out) + H(+)(in). The enzyme catalyses Fe(2+)(in) + H(+)(out) = Fe(2+)(out) + H(+)(in). Divalent metal cation transporter which exports Zn(2+), Cd(2+) and possibly Fe(2+). May be involved in zinc and iron detoxification by efflux. This Shigella flexneri serotype 5b (strain 8401) protein is Cation-efflux pump FieF.